The primary structure comprises 346 residues: Annexin A1 (346 aa).

Residue Ser5 is modified to Phosphoserine; by TRPM7. Residue Gln19 forms an Isoglutamyl lysine isopeptide (Gln-Lys) (interchain with K-?) linkage. Tyr21 carries the post-translational modification Phosphotyrosine; by EGFR. Ser27 is subject to Phosphoserine; by PKC. Phosphoserine occurs at positions 34 and 37. Annexin repeat units lie at residues 42 to 113, 114 to 185, 197 to 269, and 273 to 344; these read FDAS…ALLK, TPAQ…SLAK, DLAD…AIVK, and STPA…ALCG. Lys58 is subject to N6-acetyllysine. Ca(2+) is bound by residues Gly59, Val60, Glu62, Lys97, Leu100, Glu105, Met127, Gly129, Gly131, Thr132, and Glu134. A Phosphothreonine modification is found at Thr136. Asp171, Gly210, and Arg213 together coordinate Ca(2+). Residue Lys214 forms a Glycyl lysine isopeptide (Lys-Gly) (interchain with G-Cter in SUMO1); alternate linkage. Lys214 is covalently cross-linked (Glycyl lysine isopeptide (Lys-Gly) (interchain with G-Cter in SUMO2); alternate). A Ca(2+)-binding site is contributed by Gly215. The residue at position 239 (Lys239) is an N6-acetyllysine. Positions 253, 255, and 256 each coordinate Ca(2+). Residue Lys257 forms a Glycyl lysine isopeptide (Lys-Gly) (interchain with G-Cter in SUMO1) linkage. Glu261, Met286, Gly288, and Gly290 together coordinate Ca(2+). An N6-acetyllysine modification is found at Lys312. Cys324 and Cys343 are joined by a disulfide. Residues Leu328, Glu330, and Thr331 each coordinate Ca(2+). Residue Lys332 forms a Glycyl lysine isopeptide (Lys-Gly) (interchain with G-Cter in SUMO1) linkage. Residue Glu336 coordinates Ca(2+).

Belongs to the annexin family. In terms of assembly, homodimer; non-covalently linked. Homodimer; linked by transglutamylation. Homodimers linked by transglutamylation are observed in placenta, but not in other tissues. Interacts with S100A11. Heterotetramer, formed by two molecules each of S100A11 and ANXA1. Interacts with DYSF. Interacts with EGFR. Phosphorylated by protein kinase C, EGFR and TRPM7. Phosphorylated in response to EGF treatment. In terms of processing, sumoylated. Post-translationally, proteolytically cleaved by cathepsin CTSG to release the active N-terminal peptide Ac2-26.

It is found in the nucleus. The protein resides in the cytoplasm. The protein localises to the cell projection. Its subcellular location is the cilium. It localises to the basolateral cell membrane. It is found in the lateral cell membrane. The protein resides in the cell membrane. The protein localises to the apical cell membrane. Its subcellular location is the membrane. It localises to the endosome membrane. It is found in the secreted. The protein resides in the extracellular space. The protein localises to the early endosome. Its subcellular location is the cytoplasmic vesicle membrane. It localises to the extracellular exosome. It is found in the cytoplasmic vesicle. The protein resides in the secretory vesicle lumen. The protein localises to the phagocytic cup. Plays important roles in the innate immune response as effector of glucocorticoid-mediated responses and regulator of the inflammatory process. Has anti-inflammatory activity. Plays a role in glucocorticoid-mediated down-regulation of the early phase of the inflammatory response. Contributes to the adaptive immune response by enhancing signaling cascades that are triggered by T-cell activation, regulates differentiation and proliferation of activated T-cells. Promotes the differentiation of T-cells into Th1 cells and negatively regulates differentiation into Th2 cells. Has no effect on unstimulated T-cells. Negatively regulates hormone exocytosis via activation of the formyl peptide receptors and reorganization of the actin cytoskeleton. Has high affinity for Ca(2+) and can bind up to eight Ca(2+) ions. Displays Ca(2+)-dependent binding to phospholipid membranes. Plays a role in the formation of phagocytic cups and phagosomes. Plays a role in phagocytosis by mediating the Ca(2+)-dependent interaction between phagosomes and the actin cytoskeleton. Its function is as follows. Functions at least in part by activating the formyl peptide receptors and downstream signaling cascades. Promotes chemotaxis of granulocytes and monocytes via activation of the formyl peptide receptors. Promotes rearrangement of the actin cytoskeleton, cell polarization and cell migration. Promotes resolution of inflammation and wound healing. Acts via neutrophil N-formyl peptide receptors to enhance the release of CXCL2. The sequence is that of Annexin A1 (ANXA1) from Cavia cutleri (Guinea pig).